We begin with the raw amino-acid sequence, 206 residues long: Uridine kinase (206 aa).

11-18 (GGTGSGKS) contributes to the ATP binding site.

It belongs to the uridine kinase family.

The protein resides in the cytoplasm. The enzyme catalyses uridine + ATP = UMP + ADP + H(+). It catalyses the reaction cytidine + ATP = CMP + ADP + H(+). It participates in pyrimidine metabolism; CTP biosynthesis via salvage pathway; CTP from cytidine: step 1/3. It functions in the pathway pyrimidine metabolism; UMP biosynthesis via salvage pathway; UMP from uridine: step 1/1. The chain is Uridine kinase from Clostridium botulinum (strain Okra / Type B1).